Consider the following 230-residue polypeptide: Ureidoacrylate amidohydrolase RutB (230 aa).

Aspartate 24 (proton acceptor) is an active-site residue. Residue lysine 133 is part of the active site. Catalysis depends on cysteine 166, which acts as the Nucleophile.

The protein belongs to the isochorismatase family. RutB subfamily.

It carries out the reaction (Z)-3-ureidoacrylate + H2O + H(+) = (Z)-3-aminoacrylate + NH4(+) + CO2. It catalyses the reaction (Z)-3-ureidoacrylate + H2O = (Z)-3-aminoacrylate + carbamate + H(+). The enzyme catalyses (Z)-2-methylureidoacrylate + H2O + H(+) = (Z)-2-methylaminoacrylate + NH4(+) + CO2. In terms of biological role, hydrolyzes ureidoacrylate to form aminoacrylate and carbamate. The carbamate hydrolyzes spontaneously, thereby releasing one of the nitrogen atoms of the pyrimidine ring as ammonia and one of its carbon atoms as CO2. This chain is Ureidoacrylate amidohydrolase RutB, found in Escherichia coli (strain B / BL21-DE3).